The chain runs to 465 residues: Adenosylhomocysteinase (465 aa).

Substrate-binding residues include Thr56, Asp131, and Glu191. NAD(+) is bound at residue 192–194; that stretch reads TTT. Positions 221 and 225 each coordinate substrate. Residues Asn226, 255–260, Glu278, Asn313, 334–336, and Asn379 contribute to the NAD(+) site; these read GYGDVG and IGH.

The protein belongs to the adenosylhomocysteinase family. The cofactor is NAD(+).

It is found in the cytoplasm. The catalysed reaction is S-adenosyl-L-homocysteine + H2O = L-homocysteine + adenosine. It functions in the pathway amino-acid biosynthesis; L-homocysteine biosynthesis; L-homocysteine from S-adenosyl-L-homocysteine: step 1/1. In terms of biological role, may play a key role in the regulation of the intracellular concentration of adenosylhomocysteine. This chain is Adenosylhomocysteinase, found in Bartonella tribocorum (strain CIP 105476 / IBS 506).